The primary structure comprises 151 residues: NPC intracellular cholesterol transporter 2 (151 aa).

Positions 1-19 (MRFLAATFLLLALSTAAQA) are cleaved as a signal peptide. 3 disulfides stabilise this stretch: C27-C140, C42-C47, and C93-C99. N58 is a glycosylation site (N-linked (GlcNAc...) asparagine). Residue K116 is modified to N6-acetyllysine. N135 carries an N-linked (GlcNAc...) asparagine glycan.

The protein belongs to the NPC2 family. In terms of assembly, interacts with NPC1 (via the second lumenal domain) in a cholestrol-dependent manner. Interacts with NUS1/NgBR, the interaction stabilizes NCP2 and regulates cholesterol trafficking. Interacts with DHDDS. Interacts with NEDD4L (via C2 domain). Interacts with NPC1L1. As to expression, detected in gallbladder bile. Detected in fibroblasts, kidney, liver, spleen, small intestine, placenta and testis (at protein level). Epididymis.

The protein resides in the secreted. Its subcellular location is the endoplasmic reticulum. The protein localises to the lysosome. The enzyme catalyses cholesterol(in) = cholesterol(out). Intracellular cholesterol transporter which acts in concert with NPC1 and plays an important role in the egress of cholesterol from the lysosomal compartment. Unesterified cholesterol that has been released from LDLs in the lumen of the late endosomes/lysosomes is transferred by NPC2 to the cholesterol-binding pocket in the N-terminal domain of NPC1. May bind and mobilize cholesterol that is associated with membranes. NPC2 binds cholesterol with a 1:1 stoichiometry. Can bind a variety of sterols, including lathosterol, desmosterol and the plant sterols stigmasterol and beta-sitosterol. The secreted form of NCP2 regulates biliary cholesterol secretion via stimulation of ABCG5/ABCG8-mediated cholesterol transport. This is NPC intracellular cholesterol transporter 2 from Homo sapiens (Human).